We begin with the raw amino-acid sequence, 154 residues long: Aspartate carbamoyltransferase regulatory chain (154 aa).

Positions 109, 114, 138, and 141 each coordinate Zn(2+).

Belongs to the PyrI family. Contains catalytic and regulatory chains. It depends on Zn(2+) as a cofactor.

Functionally, involved in allosteric regulation of aspartate carbamoyltransferase. In Tolumonas auensis (strain DSM 9187 / NBRC 110442 / TA 4), this protein is Aspartate carbamoyltransferase regulatory chain.